The primary structure comprises 252 residues: Imidazole glycerol phosphate synthase subunit HisF (252 aa).

Active-site residues include aspartate 11 and aspartate 130.

This sequence belongs to the HisA/HisF family. As to quaternary structure, heterodimer of HisH and HisF.

It localises to the cytoplasm. It catalyses the reaction 5-[(5-phospho-1-deoxy-D-ribulos-1-ylimino)methylamino]-1-(5-phospho-beta-D-ribosyl)imidazole-4-carboxamide + L-glutamine = D-erythro-1-(imidazol-4-yl)glycerol 3-phosphate + 5-amino-1-(5-phospho-beta-D-ribosyl)imidazole-4-carboxamide + L-glutamate + H(+). It functions in the pathway amino-acid biosynthesis; L-histidine biosynthesis; L-histidine from 5-phospho-alpha-D-ribose 1-diphosphate: step 5/9. IGPS catalyzes the conversion of PRFAR and glutamine to IGP, AICAR and glutamate. The HisF subunit catalyzes the cyclization activity that produces IGP and AICAR from PRFAR using the ammonia provided by the HisH subunit. This is Imidazole glycerol phosphate synthase subunit HisF from Lacticaseibacillus casei (strain BL23) (Lactobacillus casei).